The primary structure comprises 192 residues: Ribosome maturation factor RimM (192 aa).

The PRC barrel domain maps to 99–186 (ADEYHVSELV…RIEIAPPPGL (88 aa)).

It belongs to the RimM family. As to quaternary structure, binds ribosomal protein uS19.

Its subcellular location is the cytoplasm. Its function is as follows. An accessory protein needed during the final step in the assembly of 30S ribosomal subunit, possibly for assembly of the head region. Essential for efficient processing of 16S rRNA. May be needed both before and after RbfA during the maturation of 16S rRNA. It has affinity for free ribosomal 30S subunits but not for 70S ribosomes. This chain is Ribosome maturation factor RimM, found in Microcystis aeruginosa (strain NIES-843 / IAM M-2473).